A 106-amino-acid polypeptide reads, in one-letter code: MYAVLVTGGKQYRVAQGETLRVEKLEVEAGNEIKFDTILMLGDSDGIKLGDALKGASVTAKVVAHGRADKVRIIKFRRRKHHMKRQGHRQHYTEIEITGIAGGDKK.

It belongs to the bacterial ribosomal protein bL21 family. In terms of assembly, part of the 50S ribosomal subunit. Contacts protein L20.

Functionally, this protein binds to 23S rRNA in the presence of protein L20. This is Large ribosomal subunit protein bL21 from Xanthomonas euvesicatoria pv. vesicatoria (strain 85-10) (Xanthomonas campestris pv. vesicatoria).